A 31-amino-acid polypeptide reads, in one-letter code: Phallacidin proprotein 1 (31 aa).

A propeptide spanning residues 1 to 10 (MSDINATRLP) is cleaved from the precursor. Residues 11-17 (AWLVDCP) constitute a cross-link (cyclopeptide (Ala-Pro)). The 2'-cysteinyl-6'-hydroxytryptophan sulfoxide (Trp-Cys) cross-link spans 12-16 (WLVDC). Residues 18-31 (CVGDDVNRLLTRGE) constitute a propeptide that is removed on maturation.

Belongs to the MSDIN fungal toxin family. Post-translationally, processed by the macrocyclase-peptidase enzyme POPB to yield a toxic cyclic heptapeptide. POPB first removes 10 residues from the N-terminus. Conformational trapping of the remaining peptide forces the enzyme to release this intermediate rather than proceed to macrocyclization. The enzyme rebinds the remaining peptide in a different conformation and catalyzes macrocyclization of the N-terminal 7 residues.

In terms of biological role, major toxin that belongs to the bicyclic heptapeptides called phallotoxins. Although structurally related to amatoxins, phallotoxins have a different mode of action, which is the stabilization of F-actin. Phallotoxins are poisonous when administered parenterally, but not orally because of poor absorption. The chain is Phallacidin proprotein 1 (PHA1_2) from Amanita bisporigera (Destroying angel).